The primary structure comprises 141 residues: Small ribosomal subunit protein bS6 (141 aa).

A disordered region spans residues 97–141 (TGQSEMLKAEENRSERRERRDRPEHADSADGDDSDNSDASDNADE). Over residues 103–124 (LKAEENRSERRERRDRPEHADS) the composition is skewed to basic and acidic residues. Over residues 125–141 (ADGDDSDNSDASDNADE) the composition is skewed to acidic residues.

Belongs to the bacterial ribosomal protein bS6 family.

Binds together with bS18 to 16S ribosomal RNA. In Pseudomonas fluorescens (strain ATCC BAA-477 / NRRL B-23932 / Pf-5), this protein is Small ribosomal subunit protein bS6.